The primary structure comprises 379 residues: Transcription termination factor 1b, mitochondrial (379 aa).

The N-terminal 37 residues, 1–37, are a transit peptide targeting the mitochondrion; it reads MASRNIWCVRRNFLFDLRGWMLQYSAEVFLKSISFRT. Interaction with DNA stretches follow at residues 151–152, 229–233, 306–313, 337–340, and 366–373; these read RS, QSTKR, SEKKFNDK, SINT, and SQRRYEAK.

Belongs to the mTERF family. Monomer. In terms of processing, phosphoprotein with mostly four phosphate groups. While the DNA-binding activity is unaffected by the phosphorylation state, only the phosphorylated form of the protein is active for termination activity. Functioning seems to be regulated by phosphorylation. As to expression, expressed strongly in the heart and at lower levels in brain, liver and kidney.

The protein localises to the mitochondrion. Transcription termination factor. Binds to a 28 bp region within the tRNA(Leu(uur)) gene at a position immediately adjacent to and downstream of the 16S rRNA gene; this region comprises a tridecamer sequence critical for directing accurate termination. Binds DNA along the major grove and promotes DNA bending and partial unwinding. Promotes base flipping. Transcription termination activity appears to be polarized with highest specificity for transcripts initiated on the light strand. The polypeptide is Transcription termination factor 1b, mitochondrial (Mus musculus (Mouse)).